A 91-amino-acid polypeptide reads, in one-letter code: Small ribosomal subunit protein uS19 (91 aa).

It belongs to the universal ribosomal protein uS19 family.

In terms of biological role, protein S19 forms a complex with S13 that binds strongly to the 16S ribosomal RNA. This is Small ribosomal subunit protein uS19 from Prochlorococcus marinus (strain MIT 9303).